Here is a 542-residue protein sequence, read N- to C-terminus: CTP synthase (542 aa).

The amidoligase domain stretch occupies residues 1-265 (MARYIFITGG…DDEVLAAFGL (265 aa)). Ser13 serves as a coordination point for CTP. A UTP-binding site is contributed by Ser13. 14 to 19 (SLGKGL) contacts ATP. L-glutamine is bound at residue Tyr54. Asp71 contributes to the ATP binding site. The Mg(2+) site is built by Asp71 and Glu139. Residues 146–148 (DIE), 186–191 (KTKPTQ), and Lys222 contribute to the CTP site. UTP-binding positions include 186 to 191 (KTKPTQ) and Lys222. 238 to 240 (RDA) contacts ATP. The region spanning 290–541 (TIAIVGKYTG…IQAAVVQSRL (252 aa)) is the Glutamine amidotransferase type-1 domain. L-glutamine is bound at residue Gly352. The active-site Nucleophile; for glutamine hydrolysis is the Cys379. L-glutamine-binding positions include 380–383 (FGMQ), Glu403, and Arg469. Catalysis depends on residues His514 and Glu516.

The protein belongs to the CTP synthase family. In terms of assembly, homotetramer.

It catalyses the reaction UTP + L-glutamine + ATP + H2O = CTP + L-glutamate + ADP + phosphate + 2 H(+). It carries out the reaction L-glutamine + H2O = L-glutamate + NH4(+). The catalysed reaction is UTP + NH4(+) + ATP = CTP + ADP + phosphate + 2 H(+). It functions in the pathway pyrimidine metabolism; CTP biosynthesis via de novo pathway; CTP from UDP: step 2/2. With respect to regulation, allosterically activated by GTP, when glutamine is the substrate; GTP has no effect on the reaction when ammonia is the substrate. The allosteric effector GTP functions by stabilizing the protein conformation that binds the tetrahedral intermediate(s) formed during glutamine hydrolysis. Inhibited by the product CTP, via allosteric rather than competitive inhibition. Catalyzes the ATP-dependent amination of UTP to CTP with either L-glutamine or ammonia as the source of nitrogen. Regulates intracellular CTP levels through interactions with the four ribonucleotide triphosphates. This is CTP synthase from Nitrobacter hamburgensis (strain DSM 10229 / NCIMB 13809 / X14).